A 646-amino-acid polypeptide reads, in one-letter code: UvrABC system protein B (646 aa).

Positions 29 to 411 (LEKNPEKSKQ…SNQVVEQIIR (383 aa)) constitute a Helicase ATP-binding domain. 42 to 49 (GVTGSGKT) is a binding site for ATP. The short motif at 95–118 (YYDYYQPESYIPQKDQYIEKDAQI) is the Beta-hairpin element. Residues 428–590 (QVEDIIKETE…ITPQTIVKPI (163 aa)) enclose the Helicase C-terminal domain. A UVR domain is found at 609–644 (PNVIVELEAEMYEAAEALEFEKAIKIRDTIAKLKKK).

This sequence belongs to the UvrB family. In terms of assembly, forms a heterotetramer with UvrA during the search for lesions. Interacts with UvrC in an incision complex.

The protein resides in the cytoplasm. Its function is as follows. The UvrABC repair system catalyzes the recognition and processing of DNA lesions. A damage recognition complex composed of 2 UvrA and 2 UvrB subunits scans DNA for abnormalities. Upon binding of the UvrA(2)B(2) complex to a putative damaged site, the DNA wraps around one UvrB monomer. DNA wrap is dependent on ATP binding by UvrB and probably causes local melting of the DNA helix, facilitating insertion of UvrB beta-hairpin between the DNA strands. Then UvrB probes one DNA strand for the presence of a lesion. If a lesion is found the UvrA subunits dissociate and the UvrB-DNA preincision complex is formed. This complex is subsequently bound by UvrC and the second UvrB is released. If no lesion is found, the DNA wraps around the other UvrB subunit that will check the other stand for damage. This is UvrABC system protein B from Methanococcus maripaludis (strain DSM 14266 / JCM 13030 / NBRC 101832 / S2 / LL).